A 306-amino-acid chain; its full sequence is UDP-3-O-acyl-N-acetylglucosamine deacetylase (306 aa).

Zn(2+)-binding residues include His-78, His-237, and Asp-241. The active-site Proton donor is His-264.

It belongs to the LpxC family. Zn(2+) is required as a cofactor.

It catalyses the reaction a UDP-3-O-[(3R)-3-hydroxyacyl]-N-acetyl-alpha-D-glucosamine + H2O = a UDP-3-O-[(3R)-3-hydroxyacyl]-alpha-D-glucosamine + acetate. It functions in the pathway glycolipid biosynthesis; lipid IV(A) biosynthesis; lipid IV(A) from (3R)-3-hydroxytetradecanoyl-[acyl-carrier-protein] and UDP-N-acetyl-alpha-D-glucosamine: step 2/6. Functionally, catalyzes the hydrolysis of UDP-3-O-myristoyl-N-acetylglucosamine to form UDP-3-O-myristoylglucosamine and acetate, the committed step in lipid A biosynthesis. The chain is UDP-3-O-acyl-N-acetylglucosamine deacetylase from Aromatoleum aromaticum (strain DSM 19018 / LMG 30748 / EbN1) (Azoarcus sp. (strain EbN1)).